We begin with the raw amino-acid sequence, 214 residues long: Ras-related protein RABA5c (214 aa).

19-26 (GDSAVGKS) serves as a coordination point for GTP. Positions 41 to 49 (SKATIGVEF) match the Effector region motif. Residues 67-71 (DTAGQ), 125-128 (NKCD), and 155-156 (SA) contribute to the GTP site. Residues cysteine 211 and cysteine 212 are each lipidated (S-geranylgeranyl cysteine).

Belongs to the small GTPase superfamily. Rab family. Interacts (via C-terminus) with GDI1. Interacts with PUX8/SAY1. Expressed in roots and actively dividing cells.

The protein resides in the golgi apparatus membrane. The protein localises to the golgi apparatus. Its subcellular location is the trans-Golgi network membrane. It localises to the cell membrane. In terms of biological role, intracellular vesicle trafficking and protein transport. Binds GTP and GDP and possesses intrinsic GTPase activity. The sequence is that of Ras-related protein RABA5c (RABA5C) from Arabidopsis thaliana (Mouse-ear cress).